The sequence spans 1167 residues: Chromosome partition protein Smc (1167 aa).

32-39 (PNGCGKSN) serves as a coordination point for ATP. Coiled-coil stretches lie at residues 170 to 274 (ISKY…RIET), 310 to 390 (QREL…HNRD), 468 to 500 (GLQE…LETL), 653 to 870 (ALLR…ERAL), and 982 to 1011 (EYLD…ETRG).

The protein belongs to the SMC family. In terms of assembly, homodimer.

It localises to the cytoplasm. Functionally, required for chromosome condensation and partitioning. This Xanthomonas oryzae pv. oryzae (strain KACC10331 / KXO85) protein is Chromosome partition protein Smc.